Consider the following 609-residue polypeptide: Neutral protease (609 aa).

Positions 1–24 (MNKTQRHINWLLAVSAATALPVTA) are cleaved as a signal peptide. The propeptide occupies 25–196 (AEMINVNDGS…VLQTWDGLNH (172 aa)). Residue His343 participates in Zn(2+) binding. Glu344 is a catalytic residue. Residues His347 and Glu367 each coordinate Zn(2+). The active-site Proton donor is His426.

Belongs to the peptidase M4 family. Requires Zn(2+) as cofactor.

The protein localises to the secreted. It carries out the reaction Preferential cleavage of bonds with bulky hydrophobic groups in P2 and P1'. Phe at P1' is the most favored residue, which distinguished this enzyme from thermolysin.. Extracellular zinc metalloprotease. The protein is Neutral protease (nprV) of Vibrio proteolyticus (Aeromonas proteolytica).